We begin with the raw amino-acid sequence, 139 residues long: Serpin-like protein HMSD (139 aa).

A signal peptide spans 1 to 20 (MSISSALAMVFMGAKGNTAA). A glycan (N-linked (GlcNAc...) asparagine) is linked at Asn-50.

The protein belongs to the serpin family. Highly expressed in dendritic cells and primary leukemia cells, especially those of myeloid lineage.

It localises to the secreted. Putative serine protease inhibitor. The protein is Serpin-like protein HMSD (HMSD) of Homo sapiens (Human).